Here is a 620-residue protein sequence, read N- to C-terminus: Chaperone protein HscA homolog (620 aa).

Belongs to the heat shock protein 70 family.

Its function is as follows. Chaperone involved in the maturation of iron-sulfur cluster-containing proteins. Has a low intrinsic ATPase activity which is markedly stimulated by HscB. The sequence is that of Chaperone protein HscA homolog from Pseudomonas putida (strain ATCC 47054 / DSM 6125 / CFBP 8728 / NCIMB 11950 / KT2440).